A 583-amino-acid chain; its full sequence is Laccase-14 (583 aa).

Positions 1-30 are cleaved as a signal peptide; sequence MAPSLGSGSTRILLIVSLLLCLRQQAVVDA. Plastocyanin-like domains lie at 38–158 and 168–320; these read HVGN…PRPG and AEHT…YDDD. N-linked (GlcNAc...) asparagine glycosylation is found at Asn41 and Asn84. Residues His88 and His90 each coordinate Cu cation. A glycan (N-linked (GlcNAc...) asparagine) is linked at Asn126. Cu cation-binding residues include His137 and His139. Residues Asn179, Asn251, Asn304, Asn338, Asn388, Asn400, Asn446, and Asn464 are each glycosylated (N-linked (GlcNAc...) asparagine). The Plastocyanin-like 3 domain occupies 426 to 567; it reads DFPDRPPVMF…AMAFDVQDGP (142 aa). Residues His482, His485, His487, His546, Cys547, His548, and His552 each contribute to the Cu cation site.

This sequence belongs to the multicopper oxidase family. Requires Cu cation as cofactor.

It localises to the secreted. Its subcellular location is the extracellular space. The protein localises to the apoplast. The catalysed reaction is 4 hydroquinone + O2 = 4 benzosemiquinone + 2 H2O. Lignin degradation and detoxification of lignin-derived products. In Oryza sativa subsp. japonica (Rice), this protein is Laccase-14 (LAC14).